We begin with the raw amino-acid sequence, 160 residues long: uncharacterized protein (160 aa).

Positions 1–18 (MELLSLAILSSFFAVANQ) are cleaved as a signal peptide.

This is an uncharacterized protein from Caenorhabditis elegans.